The sequence spans 468 residues: COBRA-like protein 5 (468 aa).

Residues 1-22 (MELHRCSLLALLLAVTCSVAVA) form the signal peptide. N-linked (GlcNAc...) asparagine glycans are attached at residues Asn31, Asn156, Asn164, and Asn228. The disordered stretch occupies residues 251–278 (GGGKNARAGDGRSRRNSGGGGGHSGGTE). Asn340, Asn355, and Asn374 each carry an N-linked (GlcNAc...) asparagine glycan. Asn443 is lipidated: GPI-anchor amidated asparagine. The propeptide at 444-468 (SAPIGPPRSVAAAASAILVVLLLVA) is removed in mature form.

This sequence belongs to the COBRA family. Expressed mainly in developing sclerenchyma cells and in vascular bundles.

The protein localises to the cell membrane. Involved in determining the orientation of cell expansion, probably by playing an important role in cellulose deposition. May act by recruiting cellulose synthesizing complexes to discrete positions on the cell surface. This Oryza sativa subsp. indica (Rice) protein is COBRA-like protein 5 (BC1).